An 876-amino-acid polypeptide reads, in one-letter code: Alanine--tRNA ligase (876 aa).

Lys-74 bears the N6-acetyllysine mark. Residues His-564, His-568, Cys-666, and His-670 each contribute to the Zn(2+) site.

Belongs to the class-II aminoacyl-tRNA synthetase family. As to quaternary structure, homotetramer. Zn(2+) serves as cofactor.

It is found in the cytoplasm. The enzyme catalyses tRNA(Ala) + L-alanine + ATP = L-alanyl-tRNA(Ala) + AMP + diphosphate. Functionally, catalyzes the attachment of alanine to tRNA(Ala) in a two-step reaction: alanine is first activated by ATP to form Ala-AMP and then transferred to the acceptor end of tRNA(Ala). Also edits incorrectly charged Ser-tRNA(Ala) and Gly-tRNA(Ala) via its editing domain. In Shigella flexneri serotype 5b (strain 8401), this protein is Alanine--tRNA ligase.